Reading from the N-terminus, the 218-residue chain is Testis expressed protein 56 (218 aa).

The sequence is that of Testis expressed protein 56 (Tex56) from Rattus norvegicus (Rat).